Consider the following 193-residue polypeptide: uncharacterized protein (193 aa).

Residues 1 to 84 (MTSKCSKWHE…RRSNQRIQLY (84 aa)) form a disordered region. Residues 43–78 (SSPRRSSPRRSPRRSSPRRSSPRRSSPRRSSPRRSN) show a composition bias toward basic residues.

It belongs to the IIV-6 378R family.

This is an uncharacterized protein from Invertebrate iridescent virus 6 (IIV-6).